A 226-amino-acid polypeptide reads, in one-letter code: Cytidylate kinase (226 aa).

Residue glycine 10 to threonine 18 coordinates ATP.

Belongs to the cytidylate kinase family. Type 1 subfamily.

The protein resides in the cytoplasm. It carries out the reaction CMP + ATP = CDP + ADP. It catalyses the reaction dCMP + ATP = dCDP + ADP. The polypeptide is Cytidylate kinase (Streptococcus pyogenes serotype M28 (strain MGAS6180)).